Here is a 339-residue protein sequence, read N- to C-terminus: Phenylalanine--tRNA ligase alpha subunit (339 aa).

E250 serves as a coordination point for Mg(2+).

Belongs to the class-II aminoacyl-tRNA synthetase family. Phe-tRNA synthetase alpha subunit type 1 subfamily. As to quaternary structure, tetramer of two alpha and two beta subunits. Requires Mg(2+) as cofactor.

It localises to the cytoplasm. It carries out the reaction tRNA(Phe) + L-phenylalanine + ATP = L-phenylalanyl-tRNA(Phe) + AMP + diphosphate + H(+). The sequence is that of Phenylalanine--tRNA ligase alpha subunit from Flavobacterium johnsoniae (strain ATCC 17061 / DSM 2064 / JCM 8514 / BCRC 14874 / CCUG 350202 / NBRC 14942 / NCIMB 11054 / UW101) (Cytophaga johnsonae).